The sequence spans 611 residues: Protein Spindly (611 aa).

Positions 1–288 form a coiled coil; that stretch reads MEESETVLKL…QFQSLQKQHA (288 aa). Basic and acidic residues predominate over residues 499 to 511; it reads LKEDSSLSTKEQD. The disordered stretch occupies residues 499 to 611; that stretch reads LKEDSSLSTK…PAATTQCPQQ (113 aa). The segment covering 549–567 has biased composition (polar residues); it reads RNTNNCSVTSTSPRSASEE. The span at 570-583 shows a compositional bias: basic and acidic residues; it reads SESKRFDEEQEKRK.

The protein belongs to the Spindly family.

It localises to the chromosome. The protein resides in the centromere. The protein localises to the kinetochore. In terms of biological role, required for the localization of dynein and dynactin to the mitotic kintochore. Dynein is believed to control the initial lateral interaction between the kinetochore and spindle microtubules and to facilitate the subsequent formation of end-on kinetochore-microtubule attachments mediated by the NDC80 complex. May act as an adapter protein linking the dynein motor complex to various cargos. This is Protein Spindly (spdl1) from Xenopus tropicalis (Western clawed frog).